Reading from the N-terminus, the 369-residue chain is Phenylalanine--tRNA ligase alpha subunit (369 aa).

Position 270 (E270) interacts with Mg(2+).

This sequence belongs to the class-II aminoacyl-tRNA synthetase family. Phe-tRNA synthetase alpha subunit type 1 subfamily. In terms of assembly, tetramer of two alpha and two beta subunits. The cofactor is Mg(2+).

Its subcellular location is the cytoplasm. It carries out the reaction tRNA(Phe) + L-phenylalanine + ATP = L-phenylalanyl-tRNA(Phe) + AMP + diphosphate + H(+). In Phenylobacterium zucineum (strain HLK1), this protein is Phenylalanine--tRNA ligase alpha subunit.